A 186-amino-acid polypeptide reads, in one-letter code: Putative CTD phosphatase-like protein 355R (186 aa).

The region spanning glutamate 2–leucine 182 is the FCP1 homology domain.

This sequence belongs to the IIV-6 355R family.

Functionally, may function as a phosphatase. This chain is Putative CTD phosphatase-like protein 355R, found in Aedes vexans (Inland floodwater mosquito).